Consider the following 147-residue polypeptide: Hemoglobin subunit epsilon (147 aa).

Residues His-3–His-147 form the Globin domain. A phosphoserine mark is found at Ser-14 and Ser-51. His-64 and His-93 together coordinate heme b.

This sequence belongs to the globin family. As to quaternary structure, heterotetramer of two alpha chains and two epsilon chains in early embryonic hemoglobin Gower-2; two zeta chains and two epsilon chains in early embryonic hemoglobin Gower-1. In terms of tissue distribution, red blood cells.

Functionally, the epsilon chain is a beta-type chain of early mammalian embryonic hemoglobin. In Alouatta belzebul (Red-handed howler monkey), this protein is Hemoglobin subunit epsilon (HBE1).